A 231-amino-acid chain; its full sequence is Octanoyltransferase (231 aa).

The BPL/LPL catalytic domain occupies 49–231; the sequence is SEAAEQVWLL…KRTFSEVFGS (183 aa). Substrate-binding positions include 87 to 94, 162 to 164, and 175 to 177; these read RGGQITYH, AIG, and GVS. Residue Cys193 is the Acyl-thioester intermediate of the active site.

Belongs to the LipB family.

The protein localises to the cytoplasm. The enzyme catalyses octanoyl-[ACP] + L-lysyl-[protein] = N(6)-octanoyl-L-lysyl-[protein] + holo-[ACP] + H(+). It participates in protein modification; protein lipoylation via endogenous pathway; protein N(6)-(lipoyl)lysine from octanoyl-[acyl-carrier-protein]: step 1/2. Catalyzes the transfer of endogenously produced octanoic acid from octanoyl-acyl-carrier-protein onto the lipoyl domains of lipoate-dependent enzymes. Lipoyl-ACP can also act as a substrate although octanoyl-ACP is likely to be the physiological substrate. The protein is Octanoyltransferase of Nitrobacter winogradskyi (strain ATCC 25391 / DSM 10237 / CIP 104748 / NCIMB 11846 / Nb-255).